The primary structure comprises 436 residues: 3-ketoacyl-CoA thiolase (436 aa).

The active-site Acyl-thioester intermediate is the cysteine 99. Residues histidine 392 and cysteine 422 each act as proton acceptor in the active site.

Belongs to the thiolase-like superfamily. Thiolase family. In terms of assembly, heterotetramer of two alpha chains (FadJ) and two beta chains (FadI).

The protein resides in the cytoplasm. The enzyme catalyses an acyl-CoA + acetyl-CoA = a 3-oxoacyl-CoA + CoA. The protein operates within lipid metabolism; fatty acid beta-oxidation. Functionally, catalyzes the final step of fatty acid oxidation in which acetyl-CoA is released and the CoA ester of a fatty acid two carbons shorter is formed. This Shewanella frigidimarina (strain NCIMB 400) protein is 3-ketoacyl-CoA thiolase.